The sequence spans 308 residues: HPr kinase/phosphorylase (308 aa).

Catalysis depends on residues histidine 138 and lysine 159. 153-160 (GESGLGKS) is a binding site for ATP. Serine 160 contacts Mg(2+). Aspartate 177 serves as the catalytic Proton acceptor; for phosphorylation activity. Proton donor; for dephosphorylation activity. The interval 201 to 210 (LEVRGLGLLD) is important for the catalytic mechanism of both phosphorylation and dephosphorylation. Residue glutamate 202 coordinates Mg(2+). Arginine 243 is a catalytic residue. Residues 264 to 269 (QVAAGR) are important for the catalytic mechanism of dephosphorylation.

Belongs to the HPrK/P family. As to quaternary structure, homohexamer. Mg(2+) serves as cofactor.

It carries out the reaction [HPr protein]-L-serine + ATP = [HPr protein]-O-phospho-L-serine + ADP + H(+). The enzyme catalyses [HPr protein]-O-phospho-L-serine + phosphate + H(+) = [HPr protein]-L-serine + diphosphate. Its function is as follows. Catalyzes the ATP- as well as the pyrophosphate-dependent phosphorylation of a specific serine residue in HPr, a phosphocarrier protein of the phosphoenolpyruvate-dependent sugar phosphotransferase system (PTS). HprK/P also catalyzes the pyrophosphate-producing, inorganic phosphate-dependent dephosphorylation (phosphorolysis) of seryl-phosphorylated HPr (P-Ser-HPr). This is HPr kinase/phosphorylase from Bordetella avium (strain 197N).